Reading from the N-terminus, the 423-residue chain is tRNA(Ile)-lysidine synthase (423 aa).

18 to 23 contacts ATP; it reads SGGADS.

This sequence belongs to the tRNA(Ile)-lysidine synthase family.

It is found in the cytoplasm. The catalysed reaction is cytidine(34) in tRNA(Ile2) + L-lysine + ATP = lysidine(34) in tRNA(Ile2) + AMP + diphosphate + H(+). Its function is as follows. Ligates lysine onto the cytidine present at position 34 of the AUA codon-specific tRNA(Ile) that contains the anticodon CAU, in an ATP-dependent manner. Cytidine is converted to lysidine, thus changing the amino acid specificity of the tRNA from methionine to isoleucine. The polypeptide is tRNA(Ile)-lysidine synthase (Aromatoleum aromaticum (strain DSM 19018 / LMG 30748 / EbN1) (Azoarcus sp. (strain EbN1))).